The primary structure comprises 226 residues: Biosynthetic peptidoglycan transglycosylase (226 aa).

The helical transmembrane segment at 7–29 (VMALSAIGLLLLPYLLTPLYRIG) threads the bilayer.

This sequence belongs to the glycosyltransferase 51 family.

The protein localises to the cell inner membrane. The catalysed reaction is [GlcNAc-(1-&gt;4)-Mur2Ac(oyl-L-Ala-gamma-D-Glu-L-Lys-D-Ala-D-Ala)](n)-di-trans,octa-cis-undecaprenyl diphosphate + beta-D-GlcNAc-(1-&gt;4)-Mur2Ac(oyl-L-Ala-gamma-D-Glu-L-Lys-D-Ala-D-Ala)-di-trans,octa-cis-undecaprenyl diphosphate = [GlcNAc-(1-&gt;4)-Mur2Ac(oyl-L-Ala-gamma-D-Glu-L-Lys-D-Ala-D-Ala)](n+1)-di-trans,octa-cis-undecaprenyl diphosphate + di-trans,octa-cis-undecaprenyl diphosphate + H(+). It functions in the pathway cell wall biogenesis; peptidoglycan biosynthesis. In terms of biological role, peptidoglycan polymerase that catalyzes glycan chain elongation from lipid-linked precursors. This is Biosynthetic peptidoglycan transglycosylase from Nitrobacter winogradskyi (strain ATCC 25391 / DSM 10237 / CIP 104748 / NCIMB 11846 / Nb-255).